Here is a 318-residue protein sequence, read N- to C-terminus: Methionyl-tRNA formyltransferase (318 aa).

Position 112 to 115 (112 to 115) interacts with (6S)-5,6,7,8-tetrahydrofolate; it reads SILP.

This sequence belongs to the Fmt family.

It carries out the reaction L-methionyl-tRNA(fMet) + (6R)-10-formyltetrahydrofolate = N-formyl-L-methionyl-tRNA(fMet) + (6S)-5,6,7,8-tetrahydrofolate + H(+). Attaches a formyl group to the free amino group of methionyl-tRNA(fMet). The formyl group appears to play a dual role in the initiator identity of N-formylmethionyl-tRNA by promoting its recognition by IF2 and preventing the misappropriation of this tRNA by the elongation apparatus. This is Methionyl-tRNA formyltransferase from Shewanella putrefaciens (strain CN-32 / ATCC BAA-453).